Reading from the N-terminus, the 358-residue chain is Alanine racemase (358 aa).

The active-site Proton acceptor; specific for D-alanine is the lysine 35. The residue at position 35 (lysine 35) is an N6-(pyridoxal phosphate)lysine. Residue arginine 130 coordinates substrate. The active-site Proton acceptor; specific for L-alanine is tyrosine 255. Methionine 303 contributes to the substrate binding site.

It belongs to the alanine racemase family. The cofactor is pyridoxal 5'-phosphate.

It carries out the reaction L-alanine = D-alanine. Its pathway is amino-acid biosynthesis; D-alanine biosynthesis; D-alanine from L-alanine: step 1/1. In terms of biological role, catalyzes the interconversion of L-alanine and D-alanine. May also act on other amino acids. The chain is Alanine racemase (alr) from Shewanella loihica (strain ATCC BAA-1088 / PV-4).